Here is a 938-residue protein sequence, read N- to C-terminus: Isoleucine--tRNA ligase (938 aa).

Residues 58 to 68 (PYANGSIHIGH) carry the 'HIGH' region motif. Residue Glu561 participates in L-isoleucyl-5'-AMP binding. Residues 602-606 (KMSKS) carry the 'KMSKS' region motif. Lys605 contributes to the ATP binding site. Zn(2+) is bound by residues Cys901, Cys904, Cys921, and Cys924.

Belongs to the class-I aminoacyl-tRNA synthetase family. IleS type 1 subfamily. In terms of assembly, monomer. It depends on Zn(2+) as a cofactor.

It is found in the cytoplasm. It carries out the reaction tRNA(Ile) + L-isoleucine + ATP = L-isoleucyl-tRNA(Ile) + AMP + diphosphate. Its function is as follows. Catalyzes the attachment of isoleucine to tRNA(Ile). As IleRS can inadvertently accommodate and process structurally similar amino acids such as valine, to avoid such errors it has two additional distinct tRNA(Ile)-dependent editing activities. One activity is designated as 'pretransfer' editing and involves the hydrolysis of activated Val-AMP. The other activity is designated 'posttransfer' editing and involves deacylation of mischarged Val-tRNA(Ile). This Erwinia tasmaniensis (strain DSM 17950 / CFBP 7177 / CIP 109463 / NCPPB 4357 / Et1/99) protein is Isoleucine--tRNA ligase.